A 1021-amino-acid chain; its full sequence is Ephrin type-B receptor 6 (1021 aa).

The first 31 residues, 1–31, serve as a signal peptide directing secretion; that stretch reads MATEGAAQLGNRVAGMVCSLWVLLLVSSVLA. At 32–594 the chain is on the extracellular side; that stretch reads LEEVLLDTTG…LSSQLPERLS (563 aa). The Eph LBD domain occupies 33–237; sequence EEVLLDTTGE…FSYTCPAVLR (205 aa). The tract at residues 163–182 is disordered; that stretch reads SFPSSSSSSSSSSSAAWAVG. The segment covering 166–176 has biased composition (low complexity); sequence SSSSSSSSSSS. Fibronectin type-III domains lie at 369-486 and 487-582; these read PPSA…TSHE and VPSA…TLPQ. N480 carries an N-linked (GlcNAc...) asparagine glycan. A helical membrane pass occupies residues 595–615; that stretch reads LVIGSILGALAFLLLAAITVL. Residues 616 to 1021 are Cytoplasmic-facing; it reads AVVFQRKRRG…HLRQQGSVEV (406 aa). One can recognise a Protein kinase domain in the interval 670-919; that stretch reads IKIEEVIGTG…QLVAAFDKMI (250 aa). Residue 676–684 coordinates ATP; that stretch reads IGTGSFGEV. The SAM domain maps to 948–1012; it reads PCLDSPQAWL…LHHIQLLQQH (65 aa). Positions 1019–1021 match the PDZ-binding motif; that stretch reads VEV.

Belongs to the protein kinase superfamily. Tyr protein kinase family. Ephrin receptor subfamily. In terms of assembly, interacts with CBL and EPHB1. Interacts with FYN; this interaction takes place in a ligand-independent manner. Ligand-binding increases phosphorylation on tyrosine residues. Phosphorylation on tyrosine residues is mediated by transphosphorylation by the catalytically active EPHB1 in a ligand-independent manner. Tyrosine phosphorylation of the receptor may act as a switch on the functional transition from cell adhesion/attraction to de-adhesion/repulsion. Expressed in brain. Expressed in non invasive breast carcinoma cell lines (at protein level). Strong expression in brain and pancreas, and weak expression in other tissues, such as heart, placenta, lung, liver, skeletal muscle and kidney. Expressed in breast non invasive tumors but not in metastatic lesions. Isoform 3 is expressed in cell lines of glioblastomas, anaplastic astrocytomas, gliosarcomas and astrocytomas. Isoform 3 is not detected in normal tissues.

The protein resides in the membrane. It is found in the secreted. In terms of biological role, kinase-defective receptor for members of the ephrin-B family. Binds to ephrin-B1 and ephrin-B2. Modulates cell adhesion and migration by exerting both positive and negative effects upon stimulation with ephrin-B2. Inhibits JNK activation, T-cell receptor-induced IL-2 secretion and CD25 expression upon stimulation with ephrin-B2. The sequence is that of Ephrin type-B receptor 6 (EPHB6) from Homo sapiens (Human).